The chain runs to 279 residues: MHPDAQLKTALKNGFDPKLLYKEPLTTVKEPVCSILEKHSKVPVDKVVSHVNEVRDRAFAVFPYACIGQFSFVELSIADSPCYREMLERTKQGHKLLDLGCAFGQELRQLIYDGTPPTNLYGSDIQQDFLSLGYELFLDRAILPDSQLIAADVLDKQSALFQRLAGELNIVYISLFLHVFDFEKQITVAQNVLDLLKAEPGSMIVCRVTACRDQEVLAATQERMPYYYHDLASWNRLWEEVQKQTGVKLSVESWEQPDELVKKHPLPGIYILGSSIRRL.

S-adenosyl-L-methionine-binding positions include 124-125 (DI) and 152-153 (DV).

Belongs to the class I-like SAM-binding methyltransferase superfamily.

It participates in secondary metabolite biosynthesis; terpenoid biosynthesis. Functionally, methyltransferase; part of the gene cluster that mediates the biosynthesis of paraherquonin, a meroterpenoid with a unique, highly congested hexacyclic molecular architecture. The first step of the pathway is the synthesis of 3,5-dimethylorsellinic acid (DMOA) by the polyketide synthase prhL. Synthesis of DMOA is followed by farnesylation by the prenyltransferase prhE, methylesterification by the methyl-transferase prhM, epoxidation of the prenyl chain by the flavin-dependent monooxygenase prhF, and cyclization of the farnesyl moiety by the terpene cyclase prhH, to yield the tetracyclic intermediate, protoaustinoid A. The short chain dehydrogenase prhI then oxidizes the C-3 alcohol group of the terpene cyclase product to transform protoaustinoid A into protoaustinoid B. The FAD-binding monooxygenase prhJ catalyzes the oxidation of protoaustinoid B into preaustinoid A which is further oxidized into preaustinoid A1 by FAD-binding monooxygenase phrK. Finally, prhA leads to berkeleydione via the berkeleyone B intermediate. PrhA is a multifunctional dioxygenase that first desaturates at C5-C6 to form berkeleyone B, followed by rearrangement of the A/B-ring to form the cycloheptadiene moiety in berkeleydione. Berkeleydione serves as the key intermediate for the biosynthesis of paraherquonin as well as many other meroterpenoids. The cytochrome P450 monooxygenases prhB, prhD, and prhN, as well as the isomerase prhC, are probably involved in the late stage of paraherquonin biosynthesis, after the production of berkeleydione. Especially prhC might be a multifunctional enzyme that catalyzes the D-ring expansion via intramolecular methoxy rearrangement, as well as the hydrolysis of the expanded D-ring. This is Methyltransferase prhM from Penicillium brasilianum.